The chain runs to 734 residues: Photosystem I P700 chlorophyll a apoprotein A2 (734 aa).

The next 8 helical transmembrane spans lie at 46 to 69, 135 to 158, 175 to 199, 273 to 291, 330 to 353, 369 to 395, 417 to 439, and 517 to 535; these read IFAS…FHVA, LYTG…LHLQ, LNHH…HVAI, IAHH…GHMY, IHFQ…QHMY, AALY…IFFI, AIIS…LYVH, and FLVH…LILV. Residues Cys559 and Cys568 each coordinate [4Fe-4S] cluster. Transmembrane regions (helical) follow at residues 575–596 and 643–665; these read AFYL…YWHW and LSVW…MFLI. Residues His654, Met662, and Tyr670 each coordinate chlorophyll a. Residue Trp671 participates in phylloquinone binding. A helical membrane pass occupies residues 707–727; that stretch reads LVGLAHFSVGYIFTYAAFLIA.

Belongs to the PsaA/PsaB family. In terms of assembly, the PsaA/B heterodimer binds the P700 chlorophyll special pair and subsequent electron acceptors. PSI consists of a core antenna complex that captures photons, and an electron transfer chain that converts photonic excitation into a charge separation. The eukaryotic PSI reaction center is composed of at least 11 subunits. P700 is a chlorophyll a/chlorophyll a' dimer, A0 is one or more chlorophyll a, A1 is one or both phylloquinones and FX is a shared 4Fe-4S iron-sulfur center. serves as cofactor.

The protein localises to the plastid. It is found in the chloroplast thylakoid membrane. The catalysed reaction is reduced [plastocyanin] + hnu + oxidized [2Fe-2S]-[ferredoxin] = oxidized [plastocyanin] + reduced [2Fe-2S]-[ferredoxin]. PsaA and PsaB bind P700, the primary electron donor of photosystem I (PSI), as well as the electron acceptors A0, A1 and FX. PSI is a plastocyanin-ferredoxin oxidoreductase, converting photonic excitation into a charge separation, which transfers an electron from the donor P700 chlorophyll pair to the spectroscopically characterized acceptors A0, A1, FX, FA and FB in turn. Oxidized P700 is reduced on the lumenal side of the thylakoid membrane by plastocyanin. This is Photosystem I P700 chlorophyll a apoprotein A2 from Aethionema grandiflorum (Persian stone-cress).